Reading from the N-terminus, the 380-residue chain is uncharacterized protein (380 aa).

The 32-residue stretch at 287–318 folds into the 4Fe-4S ferredoxin-type domain; sequence LRPKIYQDKCKNCRECLVEKYCPTFAIKRENG.

This is an uncharacterized protein from Methanocaldococcus jannaschii (strain ATCC 43067 / DSM 2661 / JAL-1 / JCM 10045 / NBRC 100440) (Methanococcus jannaschii).